The primary structure comprises 232 residues: MKMAKRGKKYVEAAKLVDRAAAYSATEAVELVKKTNTAKFDATVEAAFRLGVDPKKADQQIRGAVVLPHGTGKVQRVLVFAKGEKAKEAEAAGADFVGDTDYIGKIQQGWFDFDVVVATPDMMGEVGKLGRVLGPKGLMPNPKTGTVTFDVTKAVNEIKAGKVEYRVDKAGNIHVPIGKVSFEDAKLVENFKTIADTLQKVKPAAAKGTYMKNVTVASTMGPGVRVDVSTLA.

It belongs to the universal ribosomal protein uL1 family. Part of the 50S ribosomal subunit.

Functionally, binds directly to 23S rRNA. The L1 stalk is quite mobile in the ribosome, and is involved in E site tRNA release. In terms of biological role, protein L1 is also a translational repressor protein, it controls the translation of the L11 operon by binding to its mRNA. This is Large ribosomal subunit protein uL1 from Bacillus cereus (strain ATCC 14579 / DSM 31 / CCUG 7414 / JCM 2152 / NBRC 15305 / NCIMB 9373 / NCTC 2599 / NRRL B-3711).